The chain runs to 190 residues: Imidazoleglycerol-phosphate dehydratase (190 aa).

The protein belongs to the imidazoleglycerol-phosphate dehydratase family.

It localises to the cytoplasm. The catalysed reaction is D-erythro-1-(imidazol-4-yl)glycerol 3-phosphate = 3-(imidazol-4-yl)-2-oxopropyl phosphate + H2O. It functions in the pathway amino-acid biosynthesis; L-histidine biosynthesis; L-histidine from 5-phospho-alpha-D-ribose 1-diphosphate: step 6/9. The protein is Imidazoleglycerol-phosphate dehydratase of Campylobacter fetus subsp. fetus (strain 82-40).